The following is a 969-amino-acid chain: Protein translocase subunit SecA (969 aa).

ATP is bound by residues glutamine 99, 117–121, and aspartate 631; that span reads GEGKT.

The protein belongs to the SecA family. In terms of assembly, monomer and homodimer. Part of the essential Sec protein translocation apparatus which comprises SecA, SecYEG and auxiliary proteins SecDF. Other proteins may also be involved.

It is found in the cell inner membrane. The protein localises to the cytoplasm. The enzyme catalyses ATP + H2O + cellular proteinSide 1 = ADP + phosphate + cellular proteinSide 2.. Part of the Sec protein translocase complex. Interacts with the SecYEG preprotein conducting channel. Has a central role in coupling the hydrolysis of ATP to the transfer of proteins into and across the cell membrane, serving as an ATP-driven molecular motor driving the stepwise translocation of polypeptide chains across the membrane. The polypeptide is Protein translocase subunit SecA (Chlamydia felis (strain Fe/C-56) (Chlamydophila felis)).